The sequence spans 404 residues: 6-deoxyerythronolide B hydroxylase (404 aa).

A heme-binding site is contributed by C351.

It belongs to the cytochrome P450 family. Heme is required as a cofactor.

Its subcellular location is the cytoplasm. The enzyme catalyses 6-deoxyerythronolide B + 2 reduced [2Fe-2S]-[ferredoxin] + O2 + 2 H(+) = erythronolide B + 2 oxidized [2Fe-2S]-[ferredoxin] + H2O. Its pathway is antibiotic biosynthesis; erythromycin biosynthesis. In terms of biological role, catalyzes the conversion of 6-deoxyerythronolide B (6-DEB) to erythronolide B (EB) by the insertion of an oxygen at the 6S position of 6-DEB. Requires the participation of a ferredoxin and a ferredoxin reductase for the transfer of electrons from NADPH to the monooxygenase. The polypeptide is 6-deoxyerythronolide B hydroxylase (Saccharopolyspora erythraea (strain ATCC 11635 / DSM 40517 / JCM 4748 / NBRC 13426 / NCIMB 8594 / NRRL 2338)).